A 150-amino-acid polypeptide reads, in one-letter code: UPF0178 protein PputW619_5044 (150 aa).

Belongs to the UPF0178 family.

The sequence is that of UPF0178 protein PputW619_5044 from Pseudomonas putida (strain W619).